The sequence spans 378 residues: Circumsporozoite protein (378 aa).

Residues Met1–Cys22 form the signal peptide. The disordered stretch occupies residues His51–Glu295. Positions Asp72 to Asp100 are enriched in basic and acidic residues. A required for the binding to heparan sulfate proteoglycans (HSPGs) on the surface of host hepatocytes region spans residues Lys80 to Arg88. The region I; contains the proteolytic cleavage site stretch occupies residues Lys91–Pro95. Tandem repeats lie at residues Pro95–Pro103, Ala104–Pro112, Ala113–Pro121, Ala122–Pro130, Ala131–Pro139, Ala140–Pro148, Ala149–Pro157, Ala158–Pro166, Ala167–Pro175, Ala176–Pro184, Ala185–Pro193, Ala194–Pro202, Ala203–Pro211, Ala212–Pro220, Ala221–Pro229, Ala230–Pro238, Ala239–Pro247, Ala248–Pro256, and Ala257–Pro265. Positions Pro95–Pro265 are 19 X 9 AA tandem repeats of [PA]-G-D-R-A-[DA]-G-Q-P. Over residues Ala266–Gly284 the composition is skewed to gly residues. Over residues Gln285–Glu295 the composition is skewed to low complexity. Residues Lys304–Ala356 form the TSP type-1 domain. 2 disulfide bridges follow: Cys316–Cys350 and Cys320–Cys355. Residue Thr319 is glycosylated (O-linked (Fuc) threonine). A lipid anchor (GPI-anchor amidated cysteine) is attached at Cys355. A propeptide spans Ala356–Asn378 (removed in mature form).

This sequence belongs to the plasmodium circumsporozoite protein family. Post-translationally, during host cell invasion, proteolytically cleaved at the cell membrane in the region I by a papain-like cysteine protease of parasite origin. Cleavage is triggered by the sporozoite contact with highly sulfated heparan sulfate proteoglycans (HSPGs) present on the host hepatocyte cell surface. Cleavage exposes the TSP type-1 (TSR) domain and is required for productive invasion of host hepatocytes but not for adhesion to the host cell membrane. Cleavage is dispensable for sporozoite development in the oocyst, motility and for traversal of host and vector cells. O-glycosylated; maybe by POFUT2.

Its subcellular location is the cell membrane. The protein resides in the cytoplasm. Functionally, essential sporozoite protein. In the mosquito vector, required for sporozoite development in the oocyst, migration through the vector hemolymph and entry into the vector salivary glands. In the vertebrate host, required for sporozoite migration through the host dermis and infection of host hepatocytes. Binds to highly sulfated heparan sulfate proteoglycans (HSPGs) on the surface of host hepatocytes. In terms of biological role, in the vertebrate host, binds to highly sulfated heparan sulfate proteoglycans (HSPGs) on the surface of host hepatocytes and is required for sporozoite invasion of the host hepatocytes. This chain is Circumsporozoite protein, found in Plasmodium vivax (strain Belem).